Here is a 224-residue protein sequence, read N- to C-terminus: Flagellar L-ring protein (224 aa).

The signal sequence occupies residues 1 to 15 (MARYFILAAALLLTA). C16 is lipidated: N-palmitoyl cysteine. C16 carries S-diacylglycerol cysteine lipidation.

It belongs to the FlgH family. In terms of assembly, the basal body constitutes a major portion of the flagellar organelle and consists of four rings (L,P,S, and M) mounted on a central rod.

The protein resides in the cell outer membrane. Its subcellular location is the bacterial flagellum basal body. Functionally, assembles around the rod to form the L-ring and probably protects the motor/basal body from shearing forces during rotation. The chain is Flagellar L-ring protein from Shewanella sp. (strain MR-4).